A 171-amino-acid polypeptide reads, in one-letter code: 3-hydroxydecanoyl-[acyl-carrier-protein] dehydratase (171 aa).

The active site involves histidine 70.

It belongs to the thioester dehydratase family. FabA subfamily. Homodimer.

The protein localises to the cytoplasm. The catalysed reaction is a (3R)-hydroxyacyl-[ACP] = a (2E)-enoyl-[ACP] + H2O. The enzyme catalyses (3R)-hydroxydecanoyl-[ACP] = (2E)-decenoyl-[ACP] + H2O. It carries out the reaction (2E)-decenoyl-[ACP] = (3Z)-decenoyl-[ACP]. Its pathway is lipid metabolism; fatty acid biosynthesis. Its function is as follows. Necessary for the introduction of cis unsaturation into fatty acids. Catalyzes the dehydration of (3R)-3-hydroxydecanoyl-ACP to E-(2)-decenoyl-ACP and then its isomerization to Z-(3)-decenoyl-ACP. Can catalyze the dehydratase reaction for beta-hydroxyacyl-ACPs with saturated chain lengths up to 16:0, being most active on intermediate chain length. The sequence is that of 3-hydroxydecanoyl-[acyl-carrier-protein] dehydratase from Shewanella sp. (strain MR-4).